The primary structure comprises 1084 residues: CRISPR-associated endonuclease Cas9 (1084 aa).

Catalysis depends on D8, which acts as the For RuvC-like nuclease domain. Mn(2+) contacts are provided by D8, E496, and E500. Residues 504–665 (TEKRAREMDG…MDEEIDARSM (162 aa)) enclose the HNH Cas9-type domain. Residue H573 is the Proton acceptor for HNH nuclease domain of the active site. H727 serves as a coordination point for Mn(2+).

It belongs to the CRISPR-associated protein Cas9 family. Subtype II-C subfamily. As to quaternary structure, monomer. Binds crRNA and tracrRNA. Mg(2+) is required as a cofactor.

Functionally, CRISPR (clustered regularly interspaced short palindromic repeat) is an adaptive immune system that provides protection against mobile genetic elements (viruses, transposable elements and conjugative plasmids). CRISPR clusters contain spacers, sequences complementary to antecedent mobile elements, and target invading nucleic acids. CRISPR clusters are transcribed and processed into CRISPR RNA (crRNA). In type II CRISPR systems correct processing of pre-crRNA requires a trans-encoded small RNA (tracrRNA), endogenous ribonuclease 3 (rnc) and this protein. The tracrRNA serves as a guide for ribonuclease 3-aided processing of pre-crRNA. Subsequently Cas9/crRNA/tracrRNA endonucleolytically cleaves linear or circular dsDNA target complementary to the spacer; Cas9 is inactive in the absence of the 2 guide RNAs (gRNA). Cas9 recognizes the protospacer adjacent motif (PAM) in the CRISPR repeat sequences to help distinguish self versus nonself, as targets within the bacterial CRISPR locus do not have PAMs. PAM recognition is also required for catalytic activity. This Corynebacterium diphtheriae (strain ATCC 700971 / NCTC 13129 / Biotype gravis) protein is CRISPR-associated endonuclease Cas9.